Here is a 462-residue protein sequence, read N- to C-terminus: Trigger factor (462 aa).

The PPIase FKBP-type domain occupies 161 to 246 (GDVVVIDFVG…VKEVRAPKAA (86 aa)). The span at 428–437 (SVEDLRKDPD) shows a compositional bias: basic and acidic residues. The interval 428–462 (SVEDLRKDPDEASADGEAAPAKPKKKAAAKKKAAE) is disordered. Positions 449–462 (KPKKKAAAKKKAAE) are enriched in basic residues.

The protein belongs to the FKBP-type PPIase family. Tig subfamily.

It localises to the cytoplasm. The catalysed reaction is [protein]-peptidylproline (omega=180) = [protein]-peptidylproline (omega=0). Functionally, involved in protein export. Acts as a chaperone by maintaining the newly synthesized protein in an open conformation. Functions as a peptidyl-prolyl cis-trans isomerase. This chain is Trigger factor, found in Paramagnetospirillum magneticum (strain ATCC 700264 / AMB-1) (Magnetospirillum magneticum).